A 941-amino-acid chain; its full sequence is MPDHTTFAARHIGPDPQAVAAMLDVIGVGSLDELAAKAVPAGIRDRLSADGIAPGLDRLPPPASETEALAELRGLAEANTVAVSMIGQGYYDTLTPPVLLRNILENPAWYTAYTPYQPEISQGRLEALLNFQTMVADLTGLEIANASMLDEGTAAAEAMTLMRRASRGKSNRLAVDADVFAQTAAIVATRARPLGIEIVTADLRDGLPDGDFFGVIAQLPGASGAITDWAALVAQAHERGALVALGADLLALTLITPPGEIGADVAFGTTQRFGVPMGFGGPHAGYLAVHANHARQLPGRLVGVSLDADGSPAYRLALQTREQHIRRDKATSNICTAQVLLAVMAAMYASYHGAEGLTAIARRVHGHAEAIAAALGTAVVHDRYFDTVLARVPGRADEVIAAAKARGINLWRVDDDHVSVACDEATTDEHVAAVLEAFGVAPAEPVASEIATRTAEFLTHPAFTQYRTETAMMRYLRTLADKDIALDRSMIPLGSCTMKLNAAAEMEPITWPEFARQHPFAPASDTPGLRRLIGDLENWLVAITGYDAVSLQPNAGSQGEYAGLLAIHDYHASRGEPHRDICLIPSSAHGTNAASAALAGMRVVVVGCHDNGDVDLDDLRAKVTEHRDRLSTLMITYPSTHGVYEHDIAEICAAVHDAGGQVYVDGANLNALVGLARPGKFGGDVSHLNLHKTFCIPHGGGGPGVGPVAVRSHLAPFLPGHPHAPELPQGHPVSSAPYGSASILPISWAYIRMMGADGLRAASLTAITSANYIARRLDEYFPVLYTGENGMVAHECILDLRPITKATGVTVDDVAKRLADYGFHAPTMSFPVAGTLMVEPTESETLTEVDAFCDAMIAIRGEIDRVGAGEWPVEDNPLRGAPHTAECLVTTDWDHPYSREQAAYPLGKDFRPKVWPPVRRIDGAYGDRNLVCSCPPVEAFA.

The residue at position 692 (lysine 692) is an N6-(pyridoxal phosphate)lysine.

This sequence belongs to the GcvP family. The glycine cleavage system is composed of four proteins: P, T, L and H. It depends on pyridoxal 5'-phosphate as a cofactor.

It carries out the reaction N(6)-[(R)-lipoyl]-L-lysyl-[glycine-cleavage complex H protein] + glycine + H(+) = N(6)-[(R)-S(8)-aminomethyldihydrolipoyl]-L-lysyl-[glycine-cleavage complex H protein] + CO2. In terms of biological role, the glycine cleavage system catalyzes the degradation of glycine. The P protein binds the alpha-amino group of glycine through its pyridoxal phosphate cofactor; CO(2) is released and the remaining methylamine moiety is then transferred to the lipoamide cofactor of the H protein. This chain is Glycine dehydrogenase (decarboxylating), found in Mycolicibacterium paratuberculosis (strain ATCC BAA-968 / K-10) (Mycobacterium paratuberculosis).